The primary structure comprises 500 residues: Probable cytochrome P450 514A2 (500 aa).

The helical transmembrane segment at 4–24 (IYTIILTIIILVLIISIKDLF) threads the bilayer. Residue cysteine 446 coordinates heme.

This sequence belongs to the cytochrome P450 family. Requires heme as cofactor.

It localises to the membrane. This is Probable cytochrome P450 514A2 (cyp514A2) from Dictyostelium discoideum (Social amoeba).